The chain runs to 139 residues: D-ribose pyranase (139 aa).

The active-site Proton donor is His20. Substrate contacts are provided by residues Asp28, His106, and 128 to 130 (YAN).

This sequence belongs to the RbsD / FucU family. RbsD subfamily. As to quaternary structure, homodecamer.

The protein resides in the cytoplasm. It catalyses the reaction beta-D-ribopyranose = beta-D-ribofuranose. The protein operates within carbohydrate metabolism; D-ribose degradation; D-ribose 5-phosphate from beta-D-ribopyranose: step 1/2. In terms of biological role, catalyzes the interconversion of beta-pyran and beta-furan forms of D-ribose. This Haemophilus influenzae (strain PittGG) protein is D-ribose pyranase.